A 224-amino-acid polypeptide reads, in one-letter code: Germin-like protein 8-4 (224 aa).

A signal peptide spans 1–23 (MASSSSLYLLAALLALASWQAIA). C33 and C48 are disulfide-bonded. The Cupin type-1 domain occupies 70 to 213 (STMNKVGSNV…AFQVEKKVID (144 aa)). N78 is a glycosylation site (N-linked (GlcNAc...) asparagine). 4 residues coordinate Mn(2+): H111, H113, E118, and H158.

The protein belongs to the germin family. As to quaternary structure, oligomer (believed to be a pentamer but probably hexamer).

The protein resides in the secreted. It is found in the extracellular space. The protein localises to the apoplast. Plays a role in broad-spectrum disease resistance. Probably has no oxalate oxidase activity even if the active site is conserved. In Oryza sativa subsp. japonica (Rice), this protein is Germin-like protein 8-4 (GER1).